The following is a 157-amino-acid chain: Endoribonuclease YbeY (157 aa).

Residues His111, His115, and His121 each coordinate Zn(2+).

This sequence belongs to the endoribonuclease YbeY family. The cofactor is Zn(2+).

It is found in the cytoplasm. Its function is as follows. Single strand-specific metallo-endoribonuclease involved in late-stage 70S ribosome quality control and in maturation of the 3' terminus of the 16S rRNA. The polypeptide is Endoribonuclease YbeY (Pseudomonas putida (strain ATCC 47054 / DSM 6125 / CFBP 8728 / NCIMB 11950 / KT2440)).